Reading from the N-terminus, the 77-residue chain is Large ribosomal subunit protein eL20 (77 aa).

Belongs to the eukaryotic ribosomal protein eL20 family. Part of the 50S ribosomal subunit. Binds 23S rRNA.

The sequence is that of Large ribosomal subunit protein eL20 from Pyrococcus horikoshii (strain ATCC 700860 / DSM 12428 / JCM 9974 / NBRC 100139 / OT-3).